The primary structure comprises 229 residues: MSKLSHSEVLNTIRNGLIASCQPVDDGPMDKPEIVAAMAQASLIGGAAGLRIEGVDNLKATRPTVKAPIIAIVKRDLPDSPVRITPFLQDIDDLAAAGADIIAVDGTDRVRPVTIEAALKRIHELGCLAMADCSTLAEGLYCQQLGFDIVGSTMSGYTGGEVPNEPDYQLVKDLKAAGCFVMAEGRYNSPQLAKTAIEIGADCVTVGSALTRLEHIVGWFADEIKTAKV.

This sequence belongs to the NanE family.

It carries out the reaction an N-acyl-D-glucosamine 6-phosphate = an N-acyl-D-mannosamine 6-phosphate. Its pathway is amino-sugar metabolism; N-acetylneuraminate degradation; D-fructose 6-phosphate from N-acetylneuraminate: step 3/5. Converts N-acetylmannosamine-6-phosphate (ManNAc-6-P) to N-acetylglucosamine-6-phosphate (GlcNAc-6-P). The chain is Putative N-acetylmannosamine-6-phosphate 2-epimerase from Actinobacillus pleuropneumoniae serotype 5b (strain L20).